A 159-amino-acid chain; its full sequence is Transcriptional repressor NrdR (159 aa).

The segment at 3–34 is a zinc-finger region; that stretch reads CPFCRHDDTQVVDSRVSEDGAAIRRRRRCSAC. The 91-residue stretch at 49–139 folds into the ATP-cone domain; that stretch reads PAVVKKDGSR…VYRRFEDVSE (91 aa).

Belongs to the NrdR family. Zn(2+) is required as a cofactor.

Functionally, negatively regulates transcription of bacterial ribonucleotide reductase nrd genes and operons by binding to NrdR-boxes. In Burkholderia thailandensis (strain ATCC 700388 / DSM 13276 / CCUG 48851 / CIP 106301 / E264), this protein is Transcriptional repressor NrdR.